Here is a 429-residue protein sequence, read N- to C-terminus: 28S rRNA (cytosine-C(5))-methyltransferase (429 aa).

Position 2 is an N-acetylglycine (Gly-2). Ser-167 is subject to Phosphoserine. S-adenosyl-L-methionine-binding positions include 234 to 240, Asp-258, Arg-263, and Asp-305; that span reads CAAPGNK. The Nucleophile role is filled by Cys-359.

The protein belongs to the class I-like SAM-binding methyltransferase superfamily. RsmB/NOP family. As to expression, ubiquitous. Detected in placenta, heart and skeletal muscle.

The protein resides in the nucleus. It localises to the nucleolus. The enzyme catalyses cytidine(3782) in 28S rRNA + S-adenosyl-L-methionine = 5-methylcytidine(3782) in 28S rRNA + S-adenosyl-L-homocysteine + H(+). S-adenosyl-L-methionine-dependent methyltransferase that specifically methylates the C(5) position of cytosine 3782 (m5C3782) in 28S rRNA. m5C3782 promotes protein translation without affecting ribosome biogenesis and fidelity. Required for corpus callosum and cerebral cortex development. This Homo sapiens (Human) protein is 28S rRNA (cytosine-C(5))-methyltransferase.